Consider the following 217-residue polypeptide: Peptide methionine sulfoxide reductase MsrA 1 (217 aa).

Cysteine 57 is a catalytic residue.

The protein belongs to the MsrA Met sulfoxide reductase family.

The enzyme catalyses L-methionyl-[protein] + [thioredoxin]-disulfide + H2O = L-methionyl-(S)-S-oxide-[protein] + [thioredoxin]-dithiol. It catalyses the reaction [thioredoxin]-disulfide + L-methionine + H2O = L-methionine (S)-S-oxide + [thioredoxin]-dithiol. In terms of biological role, has an important function as a repair enzyme for proteins that have been inactivated by oxidation. Catalyzes the reversible oxidation-reduction of methionine sulfoxide in proteins to methionine. This Rhizobium meliloti (strain 1021) (Ensifer meliloti) protein is Peptide methionine sulfoxide reductase MsrA 1 (msrA1).